We begin with the raw amino-acid sequence, 428 residues long: Histidinol dehydrogenase (428 aa).

Tyr127, Gln185, and Asn208 together coordinate NAD(+). Substrate is bound by residues Ser232, Gln254, and His257. Gln254 and His257 together coordinate Zn(2+). Catalysis depends on proton acceptor residues Glu321 and His322. Positions 322, 355, 409, and 414 each coordinate substrate. Asp355 is a binding site for Zn(2+). His414 provides a ligand contact to Zn(2+).

It belongs to the histidinol dehydrogenase family. It depends on Zn(2+) as a cofactor.

The enzyme catalyses L-histidinol + 2 NAD(+) + H2O = L-histidine + 2 NADH + 3 H(+). The protein operates within amino-acid biosynthesis; L-histidine biosynthesis; L-histidine from 5-phospho-alpha-D-ribose 1-diphosphate: step 9/9. Catalyzes the sequential NAD-dependent oxidations of L-histidinol to L-histidinaldehyde and then to L-histidine. The chain is Histidinol dehydrogenase from Pasteurella multocida (strain Pm70).